The following is a 586-amino-acid chain: Arginine--tRNA ligase (586 aa).

Residues 133–143 (ANPTGPLNIVS) carry the 'HIGH' region motif.

Belongs to the class-I aminoacyl-tRNA synthetase family. As to quaternary structure, monomer.

Its subcellular location is the cytoplasm. The catalysed reaction is tRNA(Arg) + L-arginine + ATP = L-arginyl-tRNA(Arg) + AMP + diphosphate. This chain is Arginine--tRNA ligase, found in Leptospira interrogans serogroup Icterohaemorrhagiae serovar copenhageni (strain Fiocruz L1-130).